We begin with the raw amino-acid sequence, 301 residues long: Probable protein phosphatase 2C 4 (301 aa).

Residues 1-18 (MGPYLSQPNKNKTTTSGE) are compositionally biased toward polar residues. The segment at 1 to 20 (MGPYLSQPNKNKTTTSGEGK) is disordered. In terms of domain architecture, PPM-type phosphatase spans 23 to 298 (IFAASEMQGW…DNMTTLIIYL (276 aa)). Mn(2+) contacts are provided by Asp57, Gly58, Asp237, and Asp289.

The protein belongs to the PP2C family. It depends on Mg(2+) as a cofactor. Requires Mn(2+) as cofactor.

The protein resides in the membrane. It carries out the reaction O-phospho-L-seryl-[protein] + H2O = L-seryl-[protein] + phosphate. The enzyme catalyses O-phospho-L-threonyl-[protein] + H2O = L-threonyl-[protein] + phosphate. Enzyme with a broad specificity. This is Probable protein phosphatase 2C 4 from Paramecium tetraurelia.